The chain runs to 469 residues: Ufm1-specific protease 2 (469 aa).

Met-1 is modified (N-acetylmethionine). Active-site residues include Cys-302, Asp-426, and His-428.

The protein belongs to the peptidase C78 family.

The protein localises to the endoplasmic reticulum. It localises to the cytoplasm. It is found in the nucleus. Thiol-dependent isopeptidase that specifically cleaves UFM1, a ubiquitin-like modifier protein, from conjugated proteins, such as CD274/PD-L1, CYB5R3, DDRGK1, MRE11, RPL26/uL24, TRIP4 and RPL26/uL24. While it is also able to mediate the processing of UFM1 precursors, a prerequisite for conjugation reactions, UFSP2 mainly acts as a protein deUFMylase that mediates deconjugation of UFM1 from target proteins. Mediates deUFMylation of RPL26/uL24, a critical step to release the UFM1 ribosome E3 ligase (UREL) complex during the recycling of 60S ribosome subunits from the endoplasmic reticulum. Catalyzes deUFMylation of TRIP4, regulating intracellular nuclear receptors transactivation and thereby regulate cell proliferation and differentiation. The chain is Ufm1-specific protease 2 from Pongo abelii (Sumatran orangutan).